The following is a 297-amino-acid chain: UDP-N-acetylglucosamine transporter TMEM241 (297 aa).

Transmembrane regions (helical) follow at residues 7-29 (LLGL…VLSV), 32-52 (FTYP…LLHM), 69-89 (VLIW…GSKA), 93-113 (LAVP…CGYQ), 121-141 (TSLS…CLPF), 146-166 (FDPD…SYKI), 187-207 (IFSM…FGAL), 211-231 (FLYF…GFFL), 250-270 (WILC…DMAL), and 271-291 (TKAT…LVFS).

It belongs to the nucleotide-sugar transporter family. SLC35A subfamily. In terms of tissue distribution, widely expressed with high expression in lung.

It is found in the golgi apparatus. The protein localises to the cis-Golgi network membrane. Its function is as follows. Golgi-localized UDP-N-acetylglucosamine (UDP-GlcNAc) transporter that transports UDP-N-acetylglucosamine into Golgi lumen. Contributes to lysosomal targeting of NPC2, a key protein required for lysosomal cholesterol exiting, and that utilizes the mannose-6-phosphate (M6P) modification pathway for its lysosomal targeting. This Mus musculus (Mouse) protein is UDP-N-acetylglucosamine transporter TMEM241 (Tmem241).